The chain runs to 249 residues: ATP synthase subunit a, chloroplastic (249 aa).

The next 5 membrane-spanning stretches (helical) occupy residues 38-58 (AQVL…AVLA), 97-117 (VPFI…GALL), 136-156 (INTT…AGLH), 201-221 (LVVA…MMFL), and 222-242 (GLFT…AYIG).

This sequence belongs to the ATPase A chain family. As to quaternary structure, F-type ATPases have 2 components, CF(1) - the catalytic core - and CF(0) - the membrane proton channel. CF(1) has five subunits: alpha(3), beta(3), gamma(1), delta(1), epsilon(1). CF(0) has four main subunits: a, b, b' and c.

It localises to the plastid. It is found in the chloroplast thylakoid membrane. Key component of the proton channel; it plays a direct role in the translocation of protons across the membrane. In Physcomitrium patens (Spreading-leaved earth moss), this protein is ATP synthase subunit a, chloroplastic.